A 108-amino-acid chain; its full sequence is Insulin (108 aa).

The signal sequence occupies residues 1 to 21; it reads MAVWIQAGALLFLLAVSSVNA. Cystine bridges form between cysteine 30–cysteine 94, cysteine 42–cysteine 107, and cysteine 93–cysteine 98. A propeptide spans 54 to 85 (c peptide); the sequence is DVDPPLGFLPPKSAQETEVADFAFKDHAEVIR.

This sequence belongs to the insulin family. In terms of assembly, heterodimer of a B chain and an A chain linked by two disulfide bonds.

The protein resides in the secreted. Insulin decreases blood glucose concentration. It increases cell permeability to monosaccharides, amino acids and fatty acids. It accelerates glycolysis, the pentose phosphate cycle, and glycogen synthesis in liver. The sequence is that of Insulin (ins) from Cyprinus carpio (Common carp).